Consider the following 1446-residue polypeptide: DNA-directed RNA polymerase subunit beta'' (1446 aa).

Zn(2+) is bound by residues Cys-217, Cys-285, Cys-292, and Cys-295.

It belongs to the RNA polymerase beta' chain family. RpoC2 subfamily. As to quaternary structure, in plastids the minimal PEP RNA polymerase catalytic core is composed of four subunits: alpha, beta, beta', and beta''. When a (nuclear-encoded) sigma factor is associated with the core the holoenzyme is formed, which can initiate transcription. Zn(2+) serves as cofactor.

The protein resides in the plastid. Its subcellular location is the chloroplast. It carries out the reaction RNA(n) + a ribonucleoside 5'-triphosphate = RNA(n+1) + diphosphate. DNA-dependent RNA polymerase catalyzes the transcription of DNA into RNA using the four ribonucleoside triphosphates as substrates. The protein is DNA-directed RNA polymerase subunit beta'' of Thalassiosira pseudonana (Marine diatom).